A 252-amino-acid polypeptide reads, in one-letter code: Ribosomal RNA small subunit methyltransferase J (252 aa).

S-adenosyl-L-methionine-binding positions include 105–106 (RD), 121–122 (ER), and Asp-175.

Belongs to the methyltransferase superfamily. RsmJ family.

It is found in the cytoplasm. The enzyme catalyses guanosine(1516) in 16S rRNA + S-adenosyl-L-methionine = N(2)-methylguanosine(1516) in 16S rRNA + S-adenosyl-L-homocysteine + H(+). Functionally, specifically methylates the guanosine in position 1516 of 16S rRNA. The polypeptide is Ribosomal RNA small subunit methyltransferase J (Pasteurella multocida (strain Pm70)).